Reading from the N-terminus, the 944-residue chain is Protein translocase subunit SecA (944 aa).

Residues Q90, 108–112 (GEGKT), and D509 contribute to the ATP site. Positions 533 to 565 (VKPEEGHKPPVSPQRKTKSAGFKEEKNKNLSIS) are disordered.

This sequence belongs to the SecA family. In terms of assembly, monomer and homodimer. Part of the essential Sec protein translocation apparatus which comprises SecA, SecYEG and auxiliary proteins SecDF. Other proteins may also be involved.

Its subcellular location is the cell inner membrane. It localises to the cellular thylakoid membrane. The protein resides in the cytoplasm. It catalyses the reaction ATP + H2O + cellular proteinSide 1 = ADP + phosphate + cellular proteinSide 2.. Functionally, part of the Sec protein translocase complex. Interacts with the SecYEG preprotein conducting channel. Has a central role in coupling the hydrolysis of ATP to the transfer of proteins into and across the cell membrane, serving as an ATP-driven molecular motor driving the stepwise translocation of polypeptide chains across the membrane. Its function is as follows. Probably participates in protein translocation into and across both the cytoplasmic and thylakoid membranes in cyanobacterial cells. The protein is Protein translocase subunit SecA of Prochlorococcus marinus (strain NATL1A).